Here is a 1190-residue protein sequence, read N- to C-terminus: DNA-directed RNA polymerase subunit beta (1190 aa).

Belongs to the RNA polymerase beta chain family. In terms of assembly, the RNAP catalytic core consists of 2 alpha, 1 beta, 1 beta' and 1 omega subunit. When a sigma factor is associated with the core the holoenzyme is formed, which can initiate transcription.

The catalysed reaction is RNA(n) + a ribonucleoside 5'-triphosphate = RNA(n+1) + diphosphate. In terms of biological role, DNA-dependent RNA polymerase catalyzes the transcription of DNA into RNA using the four ribonucleoside triphosphates as substrates. This chain is DNA-directed RNA polymerase subunit beta, found in Streptococcus suis (strain 98HAH33).